Consider the following 176-residue polypeptide: MTTTTEFPSATAKARFVRVSPRKARRVIDLVRGRSVSDALDILRWAPQAASEPVAKVIASAAANAQNNNGLDPATLIVATVYADEGPTAKRIRPRAQGRAFRIRKRTSHITVVVESRPSKDQRSSKSSRARRAEGSKAAATAPAKKSSASKAPAKKAATKAESKTSETSEAKGGSD.

The interval 113–176 (VVESRPSKDQ…ETSEAKGGSD (64 aa)) is disordered. A compositionally biased stretch (low complexity) spans 136–152 (SKAAATAPAKKSSASKA). Residues 159–176 (TKAESKTSETSEAKGGSD) are compositionally biased toward basic and acidic residues.

This sequence belongs to the universal ribosomal protein uL22 family. Part of the 50S ribosomal subunit.

In terms of biological role, this protein binds specifically to 23S rRNA; its binding is stimulated by other ribosomal proteins, e.g. L4, L17, and L20. It is important during the early stages of 50S assembly. It makes multiple contacts with different domains of the 23S rRNA in the assembled 50S subunit and ribosome. Its function is as follows. The globular domain of the protein is located near the polypeptide exit tunnel on the outside of the subunit, while an extended beta-hairpin is found that lines the wall of the exit tunnel in the center of the 70S ribosome. The protein is Large ribosomal subunit protein uL22 of Mycobacterium marinum (strain ATCC BAA-535 / M).